The following is a 476-amino-acid chain: Aspartyl/glutamyl-tRNA(Asn/Gln) amidotransferase subunit B (476 aa).

It belongs to the GatB/GatE family. GatB subfamily. Heterotrimer of A, B and C subunits.

The enzyme catalyses L-glutamyl-tRNA(Gln) + L-glutamine + ATP + H2O = L-glutaminyl-tRNA(Gln) + L-glutamate + ADP + phosphate + H(+). It catalyses the reaction L-aspartyl-tRNA(Asn) + L-glutamine + ATP + H2O = L-asparaginyl-tRNA(Asn) + L-glutamate + ADP + phosphate + 2 H(+). In terms of biological role, allows the formation of correctly charged Asn-tRNA(Asn) or Gln-tRNA(Gln) through the transamidation of misacylated Asp-tRNA(Asn) or Glu-tRNA(Gln) in organisms which lack either or both of asparaginyl-tRNA or glutaminyl-tRNA synthetases. The reaction takes place in the presence of glutamine and ATP through an activated phospho-Asp-tRNA(Asn) or phospho-Glu-tRNA(Gln). The protein is Aspartyl/glutamyl-tRNA(Asn/Gln) amidotransferase subunit B of Lactobacillus delbrueckii subsp. bulgaricus (strain ATCC 11842 / DSM 20081 / BCRC 10696 / JCM 1002 / NBRC 13953 / NCIMB 11778 / NCTC 12712 / WDCM 00102 / Lb 14).